The sequence spans 299 residues: Taste receptor type 2 member 5 (299 aa).

A topological domain (extracellular) is located at residue M1. The helical transmembrane segment at 2-22 (LSAGLGLLMLVAVVEFLIGLI) threads the bilayer. Residues 23-45 (GNGVLVVWSFREWIRKFSWSSYN) are Cytoplasmic-facing. The chain crosses the membrane as a helical span at residues 46–66 (LIILGLAGCRFVLQWLIILDL). Over 67 to 82 (SLFPLFQSSRWLRYLS) the chain is Extracellular. Residues 83 to 103 (IFWVLVSQASLWFATFLSVFY) form a helical membrane-spanning segment. Topologically, residues 104–127 (CKKITTFDHPAYLWLKQRAYNLSL) are cytoplasmic. Residues 128–148 (WCLLGYFIINLLLTVQIGLMF) form a helical membrane-spanning segment. The Extracellular portion of the chain corresponds to 149-175 (YHPPQGNSSIRYPFESWQYLYAFRLNS). N-linked (GlcNAc...) asparagine glycosylation occurs at N155. The helical transmembrane segment at 176–196 (GSYLPLMVFLVSSGMLIVSLY) threads the bilayer. At 197-223 (THHKKMKVHSAGRRDVRAKAHITALKS) the chain is on the cytoplasmic side. The chain crosses the membrane as a helical span at residues 224–244 (LGCFLLLHLVYIMASPFSIAS). At 245–253 (KTYPPDLTS) the chain is on the extracellular side. Residues 254 to 274 (VFIWETLMAAYPSLHSLILIM) form a helical membrane-spanning segment. Topologically, residues 275 to 299 (GIPRVKQTCQKIXWKTVCARRCWGP) are cytoplasmic.

Belongs to the G-protein coupled receptor T2R family.

The protein resides in the membrane. Receptor that may play a role in the perception of bitterness and is gustducin-linked. May play a role in sensing the chemical composition of the gastrointestinal content. The activity of this receptor may stimulate alpha gustducin, mediate PLC-beta-2 activation and lead to the gating of TRPM5. The polypeptide is Taste receptor type 2 member 5 (TAS2R5) (Pan troglodytes (Chimpanzee)).